Reading from the N-terminus, the 69-residue chain is Light-harvesting polypeptide B-800/860 alpha chain (69 aa).

Residues 1–14 (MTNGKIWLVVKPTV) are Cytoplasmic-facing. Residues 15–35 (GLPIGMLFAALLAVLIHGLLF) form a helical membrane-spanning segment. Position 31 (histidine 31) interacts with a bacteriochlorophyll. Topologically, residues 36-69 (VDGRLKSWWSEFPVAKPAVVSVQAAPAPVAAEVK) are periplasmic.

This sequence belongs to the antenna complex alpha subunit family. As to quaternary structure, the core complex is formed by different alpha and beta chains, binding bacteriochlorophyll molecules, and arranged most probably in tetrameric structures disposed around the reaction center. The non-pigmented gamma chains may constitute additional components.

Its subcellular location is the cell inner membrane. Functionally, antenna complexes are light-harvesting systems, which transfer the excitation energy to the reaction centers. This Rhodocyclus tenuis (Rhodospirillum tenue) protein is Light-harvesting polypeptide B-800/860 alpha chain.